The chain runs to 271 residues: GPN-loop GTPase 3 (271 aa).

A GTP-binding site is contributed by 13–18; sequence GVGKST. A Gly-Pro-Asn (GPN)-loop; involved in dimer interface motif is present at residues 70 to 72; sequence GPN. A GTP-binding site is contributed by 173–176; sequence SKMD.

Belongs to the GPN-loop GTPase family. As to quaternary structure, heterodimers with GPN1 or GPN2. Binds to RNA polymerase II (RNAPII).

In terms of biological role, small GTPase required for proper nuclear import of RNA polymerase II and III (RNAPII and RNAPIII). May act at an RNAP assembly step prior to nuclear import. The protein is GPN-loop GTPase 3 of Yarrowia lipolytica (strain CLIB 122 / E 150) (Yeast).